The following is a 508-amino-acid chain: Phosphoenolpyruvate carboxylase (508 aa).

Belongs to the PEPCase type 2 family. In terms of assembly, homotetramer. It depends on Mg(2+) as a cofactor.

It catalyses the reaction oxaloacetate + phosphate = phosphoenolpyruvate + hydrogencarbonate. Functionally, catalyzes the irreversible beta-carboxylation of phosphoenolpyruvate (PEP) to form oxaloacetate (OAA), a four-carbon dicarboxylic acid source for the tricarboxylic acid cycle. The chain is Phosphoenolpyruvate carboxylase from Picrophilus torridus (strain ATCC 700027 / DSM 9790 / JCM 10055 / NBRC 100828 / KAW 2/3).